Consider the following 100-residue polypeptide: Urease subunit gamma (100 aa).

This sequence belongs to the urease gamma subunit family. As to quaternary structure, heterotrimer of UreA (gamma), UreB (beta) and UreC (alpha) subunits. Three heterotrimers associate to form the active enzyme.

It is found in the cytoplasm. It carries out the reaction urea + 2 H2O + H(+) = hydrogencarbonate + 2 NH4(+). The protein operates within nitrogen metabolism; urea degradation; CO(2) and NH(3) from urea (urease route): step 1/1. This chain is Urease subunit gamma, found in Prochlorococcus marinus (strain MIT 9303).